Consider the following 671-residue polypeptide: Carbohydrate acetyl esterase/feruloyl esterase (671 aa).

An N-terminal signal peptide occupies residues 1-24; that stretch reads MYQSTLKTILLASALLILPASMSA. A carbohydrate acetyl esterase region spans residues 1–296; it reads MYQSTLKTIL…YGEAVARHLG (296 aa). Active-site for acetyl esterase activity residues include S55, D271, and H274. A feruloyl esterase region spans residues 297-671; it reads YEPKRPYIEM…NEFIPHLFKK (375 aa).

In the N-terminal section; belongs to the carbohydrate esterase 6 family.

The enzyme catalyses feruloyl-polysaccharide + H2O = ferulate + polysaccharide.. It functions in the pathway glycan degradation; xylan degradation. Functionally, involved in degradation of plant cell wall polysaccharides. Bifunctional esterase that possesses both acetyl esterase and ferulic acid esterase activities. Has deacetylase activity towards acetylated xylo-oligosaccharides smaller than xylo-heptaose, as well as from glucose-pentaacetate. Is also able to release ferulic acid from methylferulate, and from the more natural substrates wheat bran, corn fiber, and XOS(FA,Ac), a corn fiber-derived substrate enriched in O-acetyl and ferulic acid esters. The polypeptide is Carbohydrate acetyl esterase/feruloyl esterase (Xylanibacter ruminicola (strain ATCC 19189 / DSM 19721 / CIP 105475 / JCM 8958 / 23) (Prevotella ruminicola)).